We begin with the raw amino-acid sequence, 357 residues long: S-adenosylmethionine decarboxylase proenzyme (357 aa).

Residues glutamate 11 and glutamate 14 contribute to the active site. The active-site Schiff-base intermediate with substrate; via pyruvic acid is serine 71. The residue at position 71 (serine 71) is a Pyruvic acid (Ser); by autocatalysis. Cysteine 85 (proton donor; for catalytic activity) is an active-site residue. Active-site proton acceptor; for processing activity residues include serine 234 and histidine 247.

Belongs to the eukaryotic AdoMetDC family. It depends on pyruvate as a cofactor. In terms of processing, is synthesized initially as an inactive proenzyme. Formation of the active enzyme involves a self-maturation process in which the active site pyruvoyl group is generated from an internal serine residue via an autocatalytic post-translational modification. Two non-identical subunits are generated from the proenzyme in this reaction, and the pyruvate is formed at the N-terminus of the alpha chain, which is derived from the carboxyl end of the proenzyme. The post-translation cleavage follows an unusual pathway, termed non-hydrolytic serinolysis, in which the side chain hydroxyl group of the serine supplies its oxygen atom to form the C-terminus of the beta chain, while the remainder of the serine residue undergoes an oxidative deamination to produce ammonia and the pyruvoyl group blocking the N-terminus of the alpha chain.

It carries out the reaction S-adenosyl-L-methionine + H(+) = S-adenosyl 3-(methylsulfanyl)propylamine + CO2. Its pathway is amine and polyamine biosynthesis; S-adenosylmethioninamine biosynthesis; S-adenosylmethioninamine from S-adenosyl-L-methionine: step 1/1. The chain is S-adenosylmethionine decarboxylase proenzyme (SAMDC) from Catharanthus roseus (Madagascar periwinkle).